The chain runs to 122 residues: MIKKENRNWRRKKRHLSIRKKIYGTVERPRLCVYKSEKHIYAQIIDDDKGHTLVAASTLDKELRETLKKTWNKEAAREVGKLIGKRAIEKGIKKVVFDRGGYRYHGRVAELAEGAREAGLEF.

It belongs to the universal ribosomal protein uL18 family. Part of the 50S ribosomal subunit; part of the 5S rRNA/L5/L18/L25 subcomplex. Contacts the 5S and 23S rRNAs.

This is one of the proteins that bind and probably mediate the attachment of the 5S RNA into the large ribosomal subunit, where it forms part of the central protuberance. This Thermosipho melanesiensis (strain DSM 12029 / CIP 104789 / BI429) protein is Large ribosomal subunit protein uL18.